We begin with the raw amino-acid sequence, 713 residues long: Methionine--tRNA ligase (713 aa).

Positions 31–41 (PYANGSIHLGH) match the 'HIGH' region motif. Zn(2+) contacts are provided by cysteine 162, cysteine 165, cysteine 175, and cysteine 178. Positions 348 to 352 (KMSKS) match the 'KMSKS' region motif. Residue lysine 351 coordinates ATP. The 105-residue stretch at 609–713 (DFAKIDLRIV…DGAKAGMRVK (105 aa)) folds into the tRNA-binding domain.

Belongs to the class-I aminoacyl-tRNA synthetase family. MetG type 1 subfamily. In terms of assembly, homodimer. Zn(2+) serves as cofactor.

Its subcellular location is the cytoplasm. The enzyme catalyses tRNA(Met) + L-methionine + ATP = L-methionyl-tRNA(Met) + AMP + diphosphate. Functionally, is required not only for elongation of protein synthesis but also for the initiation of all mRNA translation through initiator tRNA(fMet) aminoacylation. The protein is Methionine--tRNA ligase of Colwellia psychrerythraea (strain 34H / ATCC BAA-681) (Vibrio psychroerythus).